The chain runs to 326 residues: Putative ubiquitin-conjugating enzyme E2 38 (326 aa).

Residues 54-214 (NWVKKVQDEW…VFLLSLKTMV (161 aa)) form the UBC core domain. Catalysis depends on cysteine 140, which acts as the Glycyl thioester intermediate. A disordered region spans residues 297–326 (LAEKPKPPVNNANTENQSKKKTRKRSRSSR). The segment covering 315 to 326 (KKKTRKRSRSSR) has biased composition (basic residues).

It belongs to the ubiquitin-conjugating enzyme family.

The catalysed reaction is S-ubiquitinyl-[E1 ubiquitin-activating enzyme]-L-cysteine + [E2 ubiquitin-conjugating enzyme]-L-cysteine = [E1 ubiquitin-activating enzyme]-L-cysteine + S-ubiquitinyl-[E2 ubiquitin-conjugating enzyme]-L-cysteine.. It participates in protein modification; protein ubiquitination. Accepts the ubiquitin from the E1 complex and catalyzes its covalent attachment to other proteins. This Arabidopsis thaliana (Mouse-ear cress) protein is Putative ubiquitin-conjugating enzyme E2 38 (UBC38).